Here is a 491-residue protein sequence, read N- to C-terminus: MEEPTPEEEGGITIMSKSRKNPKTVVNIQSQKLDSDQNTPQFEKFTNPNPSSDTTSATNFEGLGLAEWAVETCKELGMRKPTPVQTHCVPKILAGRDVLGLAQTGSGKTAAFALPILHRLAEDPYGVFALVVTPTRELAFQLAEQFKALGSCLNLRCSVIVGGMDMLTQTMSLVSRPHIVITTPGRIKVLLENNPDVPPVFSRTKFLVLDEADRVLDVGFQDELRTIFQCLPKSRQTLLFSATMTSNLQALLEHSSNKAYFYEAYEGLKTVDTLTQQFIFEDKDAKELYLVHILSQMEDKGIRSAMIFVSTCRTCQRLSLMLDELEVENIAMHSLNSQSMRLSALSKFKSGKVPILLATDVASRGLDIPTVDLVINYDIPRDPRDYVHRVGRTARAGRGGLAVSIITETDVKLIHKIEEEVGKKMEPYNKKVITDSLEVTKVSKAKRVAMMKMLDNGFEDKVKDRRKLKRKTLADKGLLKKRGKRQKSTEN.

Residues 1–10 (MEEPTPEEEG) show a composition bias toward acidic residues. Residues 1-56 (MEEPTPEEEGGITIMSKSRKNPKTVVNIQSQKLDSDQNTPQFEKFTNPNPSSDTTS) are disordered. A compositionally biased stretch (polar residues) spans 24-56 (TVVNIQSQKLDSDQNTPQFEKFTNPNPSSDTTS). A Q motif motif is present at residues 58 to 86 (TNFEGLGLAEWAVETCKELGMRKPTPVQT). Positions 89 to 262 (VPKILAGRDV…EHSSNKAYFY (174 aa)) constitute a Helicase ATP-binding domain. Residue 102 to 109 (AQTGSGKT) participates in ATP binding. The short motif at 210–213 (DEAD) is the DEAD box element. Residues 289–438 (YLVHILSQME…NKKVITDSLE (150 aa)) enclose the Helicase C-terminal domain. The disordered stretch occupies residues 471-491 (KTLADKGLLKKRGKRQKSTEN). Residues 479–491 (LKKRGKRQKSTEN) are compositionally biased toward basic residues.

The protein belongs to the DEAD box helicase family. DDX49/DBP8 subfamily.

The enzyme catalyses ATP + H2O = ADP + phosphate + H(+). The sequence is that of DEAD-box ATP-dependent RNA helicase 36 (RH36) from Arabidopsis thaliana (Mouse-ear cress).